Reading from the N-terminus, the 353-residue chain is Protein arginine N-methyltransferase 1 (353 aa).

One can recognise an SAM-dependent MTase PRMT-type domain in the interval 32–353 (KDYYFDSYAH…LSCSTDYRMR (322 aa)). Residues His45, Arg54, Gly78, and Glu100 each contribute to the S-adenosyl-L-methionine site. Lys116 carries the post-translational modification N6-succinyllysine. Lys127 participates in a covalent cross-link: Glycyl lysine isopeptide (Lys-Gly) (interchain with G-Cter in ubiquitin). Residue Glu129 participates in S-adenosyl-L-methionine binding. Residues Glu144 and Glu153 contribute to the active site. Lys210 and Lys215 each carry N6-acetyllysine. Phosphoserine is present on residues Ser286 and Ser289.

The protein belongs to the class I-like SAM-binding methyltransferase superfamily. Protein arginine N-methyltransferase family. In terms of assembly, homodimer and heterodimer with PRMT8. Homooctamer; individual homodimers associates to form a homooctamer. Interacts with NFATC2IP. Interacts with ILF3 and SUPT5H. Individual homodimers can associate to form a homohexamer. Interacts with FOXO1; the interaction methylates FOXO1, retaining it in the nucleus and increasing its transcriptional activity. Methylation of FOXO1 is increased with oxidative stress. Interacts with CHTOP; the interaction methylates CHTOP, enabling its interaction with the 5FMC complex. Interacts with BTG1, BTG2 and IFNAR1. Interacts with and probably methylates ATXN2L. Component of the methylosome, a 20S complex containing at least CLNS1A/pICln, PRMT5/SKB1, WDR77/MEP50, PRMT1 and ERH. Interacts with DHX9 (via RGG region). Interacts (via N-terminus) with HABP4. Interacts with MAP3K5/ASK1; the interaction results in MAP3K5 methylation by PRMT1 which inhibits MAP3K5 activation. Interacts with TRIM48; the interaction results in ubiquitination of PRMT1 by TRIM48, leading to PRMT1 proteasomal degradation and activation of MAP3K5. Interacts with GATOR1 complex; this interaction is S-adenosyl-L-methionine (SAM) dependent and is perturbated by SAMTOR in a SAM-sensitive manner. Interacts with GFI1; promoting recognition and binding of MRE11 and TP53BP1 substrates by PRMT1. In terms of processing, polyubiquitinated at Lys-127 by the SCF(FBXL17) complex, leading to its subsequent degradation. Ubiquitination is regulated by acetylation at Lys-210 and Lys-215. Polyubiquitinated by E3 ubiquitin-protein ligase TRIM48, leading to suppression of MAP3K5/ASK1 methylation and subsequent MAP3K5 activation. Post-translationally, acetylation at Lys-210 and Lys-215 regulates ubiquitination by the SCF(FBXL17) complex. Acetylated at Lys-215 by p300/EP300. Deacetylated at Lys-210 and Lys-215 by SIRT1. As to expression, ubiquitous.

It is found in the nucleus. It localises to the nucleoplasm. The protein resides in the cytoplasm. Its subcellular location is the cytosol. The protein localises to the lysosome membrane. The catalysed reaction is L-arginyl-[protein] + 2 S-adenosyl-L-methionine = N(omega),N(omega)-dimethyl-L-arginyl-[protein] + 2 S-adenosyl-L-homocysteine + 2 H(+). The enzyme catalyses L-arginyl-[protein] + S-adenosyl-L-methionine = N(omega)-methyl-L-arginyl-[protein] + S-adenosyl-L-homocysteine + H(+). It carries out the reaction N(omega)-methyl-L-arginyl-[protein] + S-adenosyl-L-methionine = N(omega),N(omega)-dimethyl-L-arginyl-[protein] + S-adenosyl-L-homocysteine + H(+). Its function is as follows. Arginine methyltransferase that methylates (mono and asymmetric dimethylation) the guanidino nitrogens of arginyl residues present in proteins such as ESR1, histone H2, H3 and H4, FMR1, ILF3, HNRNPA1, HNRNPD, NFATC2IP, SUPT5H, TAF15, EWS, HABP4, SERBP1, RBM15, FOXO1, CHTOP, MAP3K5/ASK1 and MICU1. Constitutes the main enzyme that mediates monomethylation and asymmetric dimethylation of histone H4 'Arg-3' (H4R3me1 and H4R3me2a, respectively), a specific tag for epigenetic transcriptional activation. May be involved in the regulation of TAF15 transcriptional activity, act as an activator of estrogen receptor (ER)-mediated transactivation, play a key role in neurite outgrowth and act as a negative regulator of megakaryocytic differentiation, by modulating p38 MAPK pathway. Methylates RBM15, promoting ubiquitination and degradation of RBM15. Methylates MRE11 and TP53BP1, promoting the DNA damage response. Methylates FOXO1 and retains it in the nucleus increasing its transcriptional activity. Methylates CHTOP and this methylation is critical for its 5-hydroxymethylcytosine (5hmC)-binding activity. Methylates MAP3K5/ASK1 at 'Arg-85' and 'Arg-87' which promotes association of MAP3K5 with thioredoxin and negatively regulates MAP3K5 association with TRAF2, inhibiting MAP3K5 stimulation and MAP3K5-induced activation of JNK. Methylates H4R3 in genes involved in glioblastomagenesis in a CHTOP- and/or TET1-dependent manner. Plays a role in regulating alternative splicing in the heart. Methylates NPRL2 at 'Arg-78' leading to inhibition of its GTPase activator activity and then the GATOR1 complex and consequently inducing timely mTORC1 activation under methionine-sufficient conditions. The polypeptide is Protein arginine N-methyltransferase 1 (Rattus norvegicus (Rat)).